The sequence spans 109 residues: uncharacterized protein (109 aa).

Residues 82-102 (SLSFLLLLFFYFNNYYFLSMT) traverse the membrane as a helical segment.

The protein localises to the membrane. This is an uncharacterized protein from Saccharomyces cerevisiae (strain ATCC 204508 / S288c) (Baker's yeast).